Reading from the N-terminus, the 294-residue chain is tRNA dimethylallyltransferase (294 aa).

Residue 10 to 17 participates in ATP binding; the sequence is GPTAVGKT. 12 to 17 contacts substrate; the sequence is TAVGKT. An interaction with substrate tRNA region spans residues 35 to 38; the sequence is DSQQ.

It belongs to the IPP transferase family. As to quaternary structure, monomer. Mg(2+) is required as a cofactor.

The catalysed reaction is adenosine(37) in tRNA + dimethylallyl diphosphate = N(6)-dimethylallyladenosine(37) in tRNA + diphosphate. Its function is as follows. Catalyzes the transfer of a dimethylallyl group onto the adenine at position 37 in tRNAs that read codons beginning with uridine, leading to the formation of N6-(dimethylallyl)adenosine (i(6)A). The polypeptide is tRNA dimethylallyltransferase (Streptococcus sanguinis (strain SK36)).